The sequence spans 453 residues: GTPase Der (453 aa).

EngA-type G domains are found at residues 3–167 (PIIV…ISEK) and 187–360 (IKVA…EDSK). Residues 9–16 (GRTNVGKS), 57–61 (DTAGL), 119–122 (NKID), 193–200 (GRPNVGKS), 240–244 (DTAGA), and 305–308 (NKCD) each bind GTP. In terms of domain architecture, KH-like spans 361–445 (RKISTSTLIR…PIQIQFKDNE (85 aa)).

It belongs to the TRAFAC class TrmE-Era-EngA-EngB-Septin-like GTPase superfamily. EngA (Der) GTPase family. In terms of assembly, associates with the 50S ribosomal subunit.

GTPase that plays an essential role in the late steps of ribosome biogenesis. This chain is GTPase Der, found in Buchnera aphidicola subsp. Acyrthosiphon pisum (strain Tuc7).